Reading from the N-terminus, the 173-residue chain is Putative pre-16S rRNA nuclease (173 aa).

Belongs to the YqgF nuclease family.

The protein localises to the cytoplasm. Could be a nuclease involved in processing of the 5'-end of pre-16S rRNA. This is Putative pre-16S rRNA nuclease from Psychrobacter cryohalolentis (strain ATCC BAA-1226 / DSM 17306 / VKM B-2378 / K5).